A 796-amino-acid polypeptide reads, in one-letter code: Molybdenum cofactor sulfurase (796 aa).

Position 246 is an N6-(pyridoxal phosphate)lysine (K246). C418 is a catalytic residue. The MOSC domain occupies 650–796; the sequence is LRLLRQSSQR…LTCGDVVVVT (147 aa). A Phosphoserine modification is found at S752.

It belongs to the class-V pyridoxal-phosphate-dependent aminotransferase family. MOCOS subfamily. Pyridoxal 5'-phosphate is required as a cofactor.

It catalyses the reaction Mo-molybdopterin + L-cysteine + AH2 = thio-Mo-molybdopterin + L-alanine + A + H2O. Functionally, sulfurates the molybdenum cofactor. Sulfation of molybdenum is essential for xanthine dehydrogenase (XDH) and aldehyde oxidase (ADO) enzymes in which molybdenum cofactor is liganded by 1 oxygen and 1 sulfur atom in active form. This chain is Molybdenum cofactor sulfurase, found in Drosophila persimilis (Fruit fly).